The following is a 303-amino-acid chain: MFVQILGSAAGGGFPQWNCNCVNCAGFRDGSLNAQARTQSSIAISDDGVNWVLCNASPDIRAQLQSFAPMQPGRALRDTGISAIILMDSQIDHTTGLLSLREGCPHQVWCTDMVHEDLSTGFPLFTMLKHWNGGLDWNRIELDQSFTVAACPSLRFTPLPLRSAAPPYSPHRFDPHPGDNIGLIVEDLGTGGKLFYAPGLGKVDAPLLEIMAGSDCVLVDGTMWDDDEMQRRGVGTRTGREMGHLAQNGPGGMLEVLEQLPEQRKVLIHINNTNPILDEDSPERAELVRRNVEVAYDGMSIVL.

The protein belongs to the PqqB family.

The protein operates within cofactor biosynthesis; pyrroloquinoline quinone biosynthesis. Functionally, may be involved in the transport of PQQ or its precursor to the periplasm. The chain is Coenzyme PQQ synthesis protein B from Pseudomonas fluorescens (strain Pf0-1).